Consider the following 270-residue polypeptide: Thiazole synthase (270 aa).

The active-site Schiff-base intermediate with DXP is the Lys-111. Residues Gly-172, 198 to 199, and 220 to 221 each bind 1-deoxy-D-xylulose 5-phosphate; these read AG and NS. Residues 249–270 are disordered; it reads AGRLPTRAQASPSSPTTGKVND. A compositionally biased stretch (polar residues) spans 256–270; it reads AQASPSSPTTGKVND.

Belongs to the ThiG family. Homotetramer. Forms heterodimers with either ThiH or ThiS.

It is found in the cytoplasm. It carries out the reaction [ThiS sulfur-carrier protein]-C-terminal-Gly-aminoethanethioate + 2-iminoacetate + 1-deoxy-D-xylulose 5-phosphate = [ThiS sulfur-carrier protein]-C-terminal Gly-Gly + 2-[(2R,5Z)-2-carboxy-4-methylthiazol-5(2H)-ylidene]ethyl phosphate + 2 H2O + H(+). It functions in the pathway cofactor biosynthesis; thiamine diphosphate biosynthesis. In terms of biological role, catalyzes the rearrangement of 1-deoxy-D-xylulose 5-phosphate (DXP) to produce the thiazole phosphate moiety of thiamine. Sulfur is provided by the thiocarboxylate moiety of the carrier protein ThiS. In vitro, sulfur can be provided by H(2)S. The sequence is that of Thiazole synthase from Synechococcus sp. (strain WH7803).